Here is a 157-residue protein sequence, read N- to C-terminus: Large ribosomal subunit protein eL21 (157 aa).

Positions 110–132 are disordered; sequence QANDQAKAEGNKAGKRVSTKRNP.

Belongs to the eukaryotic ribosomal protein eL21 family.

The polypeptide is Large ribosomal subunit protein eL21 (RPL21) (Tetrahymena thermophila (strain SB210)).